The following is a 374-amino-acid chain: MIFLPDFSEKIRKFYLNLSIKIEKIKTLSKINLYCYINLFYRTNIQMSLEISVLGTKKSLSSILGNSNESSKETTTYKSQNQQFQSQSIHTQQKIIEKKYDNQNDRFQRDVFSRPNVKPSNTQSLQARVNMANSYDRNSLAWIVECLKTEVMNRGLNSINQNLHSSDIELLKNFKTKFTNYQNNWNGLMGFMMKNIVKIDDKYMLHNFFGIKEIVVNQIINISLSYILIGAPIENEIKLFILNTVPLAFNTIHVINTKISKINRTIEELSSQKQYNSYTIQEFESEIKTNPKIKNNHTKEKLLKLHSEQKSLSEKINKLSGEKDIEQSMINNEIYKLVTGLSFNYFMHDDWCPPLDNNIIKETQTKSNIISLFF.

Residues 298–332 (TKEKLLKLHSEQKSLSEKINKLSGEKDIEQSMINN) adopt a coiled-coil conformation.

This is an uncharacterized protein from Acanthamoeba polyphaga (Amoeba).